The chain runs to 300 residues: Phosphoenolpyruvate phosphomutase (300 aa).

Positions 1-10 (MLANSLKSFF) are excised as a propeptide. Residue aspartate 66 is the Nucleophile of the active site.

This sequence belongs to the isocitrate lyase/PEP mutase superfamily. PEP mutase family.

It carries out the reaction phosphoenolpyruvate + H(+) = 3-phosphonopyruvate. The protein operates within phosphorus metabolism; phosphonate biosynthesis. Functionally, formation of a carbon-phosphorus bond by converting phosphoenolpyruvate (PEP) to phosphonopyruvate (P-Pyr). This Tetrahymena pyriformis protein is Phosphoenolpyruvate phosphomutase (PEPM).